Reading from the N-terminus, the 285-residue chain is Diaminopimelate epimerase (285 aa).

Residues asparagine 15 and asparagine 68 each contribute to the substrate site. The active-site Proton donor is the cysteine 77. Substrate contacts are provided by residues 78-79, asparagine 165, asparagine 201, and 219-220; these read GN and ER. Cysteine 228 acts as the Proton acceptor in catalysis. Residue 229–230 participates in substrate binding; it reads GT.

It belongs to the diaminopimelate epimerase family. Homodimer.

Its subcellular location is the cytoplasm. The catalysed reaction is (2S,6S)-2,6-diaminopimelate = meso-2,6-diaminopimelate. Its pathway is amino-acid biosynthesis; L-lysine biosynthesis via DAP pathway; DL-2,6-diaminopimelate from LL-2,6-diaminopimelate: step 1/1. Its function is as follows. Catalyzes the stereoinversion of LL-2,6-diaminopimelate (L,L-DAP) to meso-diaminopimelate (meso-DAP), a precursor of L-lysine and an essential component of the bacterial peptidoglycan. This Synechococcus sp. (strain JA-2-3B'a(2-13)) (Cyanobacteria bacterium Yellowstone B-Prime) protein is Diaminopimelate epimerase.